An 83-amino-acid polypeptide reads, in one-letter code: Cell division topological specificity factor (83 aa).

Belongs to the MinE family.

In terms of biological role, prevents the cell division inhibition by proteins MinC and MinD at internal division sites while permitting inhibition at polar sites. This ensures cell division at the proper site by restricting the formation of a division septum at the midpoint of the long axis of the cell. This chain is Cell division topological specificity factor, found in Marinobacter nauticus (strain ATCC 700491 / DSM 11845 / VT8) (Marinobacter aquaeolei).